The following is a 717-amino-acid chain: Ribosomal RNA large subunit methyltransferase K/L (717 aa).

The THUMP domain occupies 45-142 (GAYRICLGSR…DKRSGVQTVQ (98 aa)).

Belongs to the methyltransferase superfamily. RlmKL family.

Its subcellular location is the cytoplasm. It catalyses the reaction guanosine(2445) in 23S rRNA + S-adenosyl-L-methionine = N(2)-methylguanosine(2445) in 23S rRNA + S-adenosyl-L-homocysteine + H(+). It carries out the reaction guanosine(2069) in 23S rRNA + S-adenosyl-L-methionine = N(2)-methylguanosine(2069) in 23S rRNA + S-adenosyl-L-homocysteine + H(+). Specifically methylates the guanine in position 2445 (m2G2445) and the guanine in position 2069 (m7G2069) of 23S rRNA. The sequence is that of Ribosomal RNA large subunit methyltransferase K/L from Hahella chejuensis (strain KCTC 2396).